Here is a 347-residue protein sequence, read N- to C-terminus: GMP reductase (347 aa).

108–131 lines the NADP(+) pocket; sequence ADFDKMKQILALSPSLKFICIDVA. Residues G181 and G183 each coordinate K(+). Residue C186 is the Thioimidate intermediate of the active site. 216–239 serves as a coordination point for NADP(+); it reads IVSDGGCSVPGDVAKAFGGGADFV.

The protein belongs to the IMPDH/GMPR family. GuaC type 1 subfamily. As to quaternary structure, homotetramer.

It carries out the reaction IMP + NH4(+) + NADP(+) = GMP + NADPH + 2 H(+). In terms of biological role, catalyzes the irreversible NADPH-dependent deamination of GMP to IMP. It functions in the conversion of nucleobase, nucleoside and nucleotide derivatives of G to A nucleotides, and in maintaining the intracellular balance of A and G nucleotides. The sequence is that of GMP reductase from Yersinia pestis bv. Antiqua (strain Antiqua).